The primary structure comprises 155 residues: 3-dehydroquinate dehydratase (155 aa).

Catalysis depends on Tyr-32, which acts as the Proton acceptor. Asn-84, His-90, and Asp-97 together coordinate substrate. The active-site Proton donor is His-110. Residues 111 to 112 and Arg-121 contribute to the substrate site; that span reads LS.

This sequence belongs to the type-II 3-dehydroquinase family. As to quaternary structure, homododecamer.

It catalyses the reaction 3-dehydroquinate = 3-dehydroshikimate + H2O. It functions in the pathway metabolic intermediate biosynthesis; chorismate biosynthesis; chorismate from D-erythrose 4-phosphate and phosphoenolpyruvate: step 3/7. Functionally, catalyzes a trans-dehydration via an enolate intermediate. The chain is 3-dehydroquinate dehydratase from Ralstonia pickettii (strain 12J).